The primary structure comprises 105 residues: Met repressor (105 aa).

It belongs to the MetJ family. Homodimer.

It is found in the cytoplasm. In terms of biological role, this regulatory protein, when combined with SAM (S-adenosylmethionine) represses the expression of the methionine regulon and of enzymes involved in SAM synthesis. In Glaesserella parasuis serovar 5 (strain SH0165) (Haemophilus parasuis), this protein is Met repressor.